A 552-amino-acid chain; its full sequence is Urocanate hydratase (552 aa).

Residues 49–50, Gln-127, 173–175, Asp-193, 239–240, 260–264, 270–271, and Tyr-319 each bind NAD(+); these read GG, GMG, NA, QTSAH, and YI. The active site involves Cys-407. Gly-489 contributes to the NAD(+) binding site.

It belongs to the urocanase family. NAD(+) serves as cofactor.

The protein resides in the cytoplasm. It carries out the reaction 4-imidazolone-5-propanoate = trans-urocanate + H2O. It participates in amino-acid degradation; L-histidine degradation into L-glutamate; N-formimidoyl-L-glutamate from L-histidine: step 2/3. In terms of biological role, catalyzes the conversion of urocanate to 4-imidazolone-5-propionate. The polypeptide is Urocanate hydratase (Bacillus cereus (strain 03BB102)).